Reading from the N-terminus, the 353-residue chain is UDP-N-acetylglucosamine--N-acetylmuramyl-(pentapeptide) pyrophosphoryl-undecaprenol N-acetylglucosamine transferase (353 aa).

UDP-N-acetyl-alpha-D-glucosamine-binding positions include Asn123, Arg161, Ser189, Ile243, 262–267 (ALTVSE), and Gln287.

It belongs to the glycosyltransferase 28 family. MurG subfamily.

It localises to the cell membrane. It catalyses the reaction di-trans,octa-cis-undecaprenyl diphospho-N-acetyl-alpha-D-muramoyl-L-alanyl-D-glutamyl-meso-2,6-diaminopimeloyl-D-alanyl-D-alanine + UDP-N-acetyl-alpha-D-glucosamine = di-trans,octa-cis-undecaprenyl diphospho-[N-acetyl-alpha-D-glucosaminyl-(1-&gt;4)]-N-acetyl-alpha-D-muramoyl-L-alanyl-D-glutamyl-meso-2,6-diaminopimeloyl-D-alanyl-D-alanine + UDP + H(+). Its pathway is cell wall biogenesis; peptidoglycan biosynthesis. Functionally, cell wall formation. Catalyzes the transfer of a GlcNAc subunit on undecaprenyl-pyrophosphoryl-MurNAc-pentapeptide (lipid intermediate I) to form undecaprenyl-pyrophosphoryl-MurNAc-(pentapeptide)GlcNAc (lipid intermediate II). The polypeptide is UDP-N-acetylglucosamine--N-acetylmuramyl-(pentapeptide) pyrophosphoryl-undecaprenol N-acetylglucosamine transferase (Buchnera aphidicola subsp. Baizongia pistaciae (strain Bp)).